Reading from the N-terminus, the 238-residue chain is 2-C-methyl-D-erythritol 4-phosphate cytidylyltransferase (238 aa).

Belongs to the IspD/TarI cytidylyltransferase family. IspD subfamily.

It catalyses the reaction 2-C-methyl-D-erythritol 4-phosphate + CTP + H(+) = 4-CDP-2-C-methyl-D-erythritol + diphosphate. It functions in the pathway isoprenoid biosynthesis; isopentenyl diphosphate biosynthesis via DXP pathway; isopentenyl diphosphate from 1-deoxy-D-xylulose 5-phosphate: step 2/6. Its function is as follows. Catalyzes the formation of 4-diphosphocytidyl-2-C-methyl-D-erythritol from CTP and 2-C-methyl-D-erythritol 4-phosphate (MEP). The chain is 2-C-methyl-D-erythritol 4-phosphate cytidylyltransferase from Acinetobacter baumannii (strain ATCC 17978 / DSM 105126 / CIP 53.77 / LMG 1025 / NCDC KC755 / 5377).